A 345-amino-acid polypeptide reads, in one-letter code: Membrane progestin receptor alpha (345 aa).

Residues 1–74 are Cytoplasmic-facing; the sequence is MAMAVAQKFN…FQRHNEAVNV (74 aa). A helical transmembrane segment spans residues 75–95; that stretch reads WTHLLAALALLLRLIGLAASV. Residues 96–102 lie on the Extracellular side of the membrane; that stretch reads DFREDPH. A helical membrane pass occupies residues 103–123; that stretch reads ALPLFFIVLASFTYLSFSAVA. Topologically, residues 124–136 are cytoplasmic; it reads HLLQAKSEFWHYS. The helical transmembrane segment at 137 to 157 threads the bilayer; that stretch reads FFFLDYVGVAVYQFGSALAHF. Topologically, residues 158-168 are extracellular; that stretch reads YYAIEPSWHDK. The chain crosses the membrane as a helical span at residues 169–189; that stretch reads VQAIFLPTAAFLAWLSCAGSC. Over 190–243 the chain is Cytoplasmic; the sequence is YNKYSQKPGLLGRIFQEAPSALAYVLDISPVLHRIIVSPLPAEEDPALLYHKCQ. Residues 244–264 traverse the membrane as a helical segment; the sequence is VVFFLLAAAFFSTVMPESWFP. The Extracellular portion of the chain corresponds to 265–268; the sequence is GSCH. The chain crosses the membrane as a helical span at residues 269-289; sequence IFGQGHQVFHVFLVLCTLAQL. Over 290–315 the chain is Cytoplasmic; sequence EAVTLDYQARRGIYEPLHARWPHNFS. A helical membrane pass occupies residues 316 to 336; it reads GLFLLTVASSSLTALLLSQLV. Over 337–345 the chain is Extracellular; that stretch reads RRKLHQKTK.

This sequence belongs to the ADIPOR family. As to expression, detected in most adult tissues. Higher expression found in white fat and liver than brown fat and skeletal muscle.

Its subcellular location is the cell membrane. Plasma membrane progesterone (P4) receptor coupled to G proteins. Seems to act through a G(i) mediated pathway. May be involved in oocyte maturation. Involved in neurosteroid inhibition of apoptosis. Also binds dehydroepiandrosterone (DHEA), pregnanolone, pregnenolone and allopregnanolone. This is Membrane progestin receptor alpha from Mus musculus (Mouse).